The sequence spans 518 residues: 4-trimethylaminobutyraldehyde dehydrogenase B (518 aa).

Residues K204 and 256–260 (GSVPT) contribute to the NAD(+) site. E278 serves as the catalytic Proton acceptor. The active-site Nucleophile is C312. E415 is an NAD(+) binding site.

Belongs to the aldehyde dehydrogenase family. As to quaternary structure, homotetramer.

The protein localises to the cytoplasm. It is found in the cytosol. The catalysed reaction is 4-(trimethylamino)butanal + NAD(+) + H2O = 4-(trimethylamino)butanoate + NADH + 2 H(+). It catalyses the reaction an aldehyde + NAD(+) + H2O = a carboxylate + NADH + 2 H(+). It participates in amine and polyamine biosynthesis; carnitine biosynthesis. Converts gamma-trimethylaminobutyraldehyde into gamma-butyrobetaine with high efficiency (in vitro). Can catalyze the irreversible oxidation of a broad range of aldehydes to the corresponding acids in an NAD-dependent reaction, but with low efficiency. This Danio rerio (Zebrafish) protein is 4-trimethylaminobutyraldehyde dehydrogenase B (aldh9a1b).